A 100-amino-acid chain; its full sequence is Urease subunit gamma (100 aa).

It belongs to the urease gamma subunit family. Heterotrimer of UreA (gamma), UreB (beta) and UreC (alpha) subunits. Three heterotrimers associate to form the active enzyme.

The protein resides in the cytoplasm. The enzyme catalyses urea + 2 H2O + H(+) = hydrogencarbonate + 2 NH4(+). The protein operates within nitrogen metabolism; urea degradation; CO(2) and NH(3) from urea (urease route): step 1/1. In Synechocystis sp. (strain ATCC 27184 / PCC 6803 / Kazusa), this protein is Urease subunit gamma.